A 182-amino-acid chain; its full sequence is Adenylate kinase (182 aa).

Residue 12-17 participates in ATP binding; the sequence is GAGKGT. The interval 32–61 is NMP; the sequence is STGELLRKEIEMNTALGIQVKDIMNRGELV. Residues threonine 33, arginine 38, 59–61, 85–88, and glutamine 92 contribute to the AMP site; these read ELV and GYPR. An LID region spans residues 126–132; that stretch reads LRGRKDD. Arginine 127 contacts ATP. The AMP site is built by arginine 129 and arginine 140. Arginine 168 contacts ATP.

This sequence belongs to the adenylate kinase family. As to quaternary structure, monomer.

Its subcellular location is the cytoplasm. The catalysed reaction is AMP + ATP = 2 ADP. It functions in the pathway purine metabolism; AMP biosynthesis via salvage pathway; AMP from ADP: step 1/1. Catalyzes the reversible transfer of the terminal phosphate group between ATP and AMP. Plays an important role in cellular energy homeostasis and in adenine nucleotide metabolism. The chain is Adenylate kinase from Prochlorococcus marinus (strain MIT 9301).